We begin with the raw amino-acid sequence, 306 residues long: Ornithine carbamoyltransferase (306 aa).

Carbamoyl phosphate is bound by residues 53-56 (STRT), Q80, R104, and 131-134 (HPCQ). L-ornithine-binding positions include N162, D219, and 223-224 (SM). Carbamoyl phosphate-binding positions include 259 to 260 (CL) and R287.

This sequence belongs to the aspartate/ornithine carbamoyltransferase superfamily. OTCase family.

The protein localises to the cytoplasm. It carries out the reaction carbamoyl phosphate + L-ornithine = L-citrulline + phosphate + H(+). It functions in the pathway amino-acid biosynthesis; L-arginine biosynthesis; L-arginine from L-ornithine and carbamoyl phosphate: step 1/3. Reversibly catalyzes the transfer of the carbamoyl group from carbamoyl phosphate (CP) to the N(epsilon) atom of ornithine (ORN) to produce L-citrulline. In Psychrobacter sp. (strain PRwf-1), this protein is Ornithine carbamoyltransferase.